The sequence spans 617 residues: Alkaline/neutral invertase E, chloroplastic (617 aa).

Residues 1–45 constitute a chloroplast transit peptide; it reads MAASETVLRVPLGSVSQSCYLASFFVNSTPNLSFKPVSRNRKTVR. At Ser87 the chain carries Phosphoserine.

It belongs to the glycosyl hydrolase 100 family. In terms of tissue distribution, expressed in roots, leaves and flowers.

The protein resides in the plastid. It is found in the chloroplast. The enzyme catalyses Hydrolysis of terminal non-reducing beta-D-fructofuranoside residues in beta-D-fructofuranosides.. Its function is as follows. Chloroplastic invertase that cleaves sucrose into glucose and fructose and is associated with the development of the photosynthetic apparatus and the assimilation of nitrogen in seedlings to control the sucrose to hexose ratio. Participates in the carbon flux between the cytosol and plastids in leaves. In Arabidopsis thaliana (Mouse-ear cress), this protein is Alkaline/neutral invertase E, chloroplastic.